The primary structure comprises 306 residues: Porphobilinogen deaminase (306 aa).

S-(dipyrrolylmethanemethyl)cysteine is present on Cys-240.

This sequence belongs to the HMBS family. Monomer. The cofactor is dipyrromethane.

The catalysed reaction is 4 porphobilinogen + H2O = hydroxymethylbilane + 4 NH4(+). It participates in porphyrin-containing compound metabolism; protoporphyrin-IX biosynthesis; coproporphyrinogen-III from 5-aminolevulinate: step 2/4. Its function is as follows. Tetrapolymerization of the monopyrrole PBG into the hydroxymethylbilane pre-uroporphyrinogen in several discrete steps. The polypeptide is Porphobilinogen deaminase (Thiobacillus denitrificans (strain ATCC 25259 / T1)).